Consider the following 443-residue polypeptide: Phosphoglucosamine mutase (443 aa).

The active-site Phosphoserine intermediate is serine 101. Positions 101, 239, 241, and 243 each coordinate Mg(2+). Serine 101 carries the post-translational modification Phosphoserine.

Belongs to the phosphohexose mutase family. Mg(2+) is required as a cofactor. Activated by phosphorylation.

The catalysed reaction is alpha-D-glucosamine 1-phosphate = D-glucosamine 6-phosphate. Functionally, catalyzes the conversion of glucosamine-6-phosphate to glucosamine-1-phosphate. The chain is Phosphoglucosamine mutase from Francisella tularensis subsp. holarctica (strain FTNF002-00 / FTA).